A 484-amino-acid chain; its full sequence is Ectonucleoside triphosphate diphosphohydrolase 6 (484 aa).

The Cytoplasmic portion of the chain corresponds to Met1–Arg39. A helical; Signal-anchor for type II membrane protein transmembrane segment spans residues Val40–Ile60. The Lumenal portion of the chain corresponds to Lys61 to Ser484. N-linked (GlcNAc...) asparagine glycosylation is present at Asn220. Glu224 acts as the Proton acceptor in catalysis. The N-linked (GlcNAc...) asparagine glycan is linked to Asn284. 2 cysteine pairs are disulfide-bonded: Cys325/Cys356 and Cys416/Cys430.

Belongs to the GDA1/CD39 NTPase family. Monomer. It depends on Ca(2+) as a cofactor. The cofactor is Mg(2+). In terms of processing, the secreted form may be produced by intracellular processing. N-glycosylated. In terms of tissue distribution, expressed in most tissues, but predominantly in heart.

The protein resides in the golgi apparatus membrane. It is found in the secreted. The protein localises to the cell membrane. The enzyme catalyses a ribonucleoside 5'-diphosphate + H2O = a ribonucleoside 5'-phosphate + phosphate + H(+). It catalyses the reaction IDP + H2O = IMP + phosphate + H(+). The catalysed reaction is GDP + H2O = GMP + phosphate + H(+). It carries out the reaction UDP + H2O = UMP + phosphate + H(+). With respect to regulation, glycosylation does not appear to be required for enzymatic activity. Its function is as follows. Catalyzes the hydrolysis of nucleoside triphosphates and diphosphates in a calcium- or magnesium-dependent manner. Has a strong preference for nucleoside diphosphates, preferentially hydrolyzes GDP, IDP, and UDP, with slower hydrolysis of CDP, ITP, GTP, CTP, ADP, and UTP and virtually no hydrolysis of ATP. The membrane bound form might support glycosylation reactions in the Golgi apparatus and, when released from cells, might catalyze the hydrolysis of extracellular nucleotides. This is Ectonucleoside triphosphate diphosphohydrolase 6 (ENTPD6) from Homo sapiens (Human).